We begin with the raw amino-acid sequence, 627 residues long: WPP domain-interacting tail-anchored protein 2 (627 aa).

Coiled coils occupy residues 81–152 (CGIL…RRTL), 188–218 (LEKS…KLHY), and 312–542 (TLRE…KILR). Residues 577 to 597 (SLQEDERTREEPEKQSVSEKS) are disordered. Residues 580 to 597 (EDERTREEPEKQSVSEKS) are compositionally biased toward basic and acidic residues. A helical membrane pass occupies residues 606–626 (LKHILVVALVFVLFCSFFGVT).

As to quaternary structure, component of Ran complexes at least composed of WIT1 or WIT2, RANGAP1 or RANGAP2, and WIP1 or WIP2 or WIP3. Interacts with KAKU1. Core component of the LINC complex which is composed of inner nuclear membrane SUN domain-containing proteins coupled to outer nuclear membrane WIP and WIT proteins. The LINC complex also involves nucleoskeletal proteins CRWN/LINC and possibly KAKU4 and the cytoskeletal myosin KAKU1. Interacts with WIP1, WIP2 and WIP3. As to expression, ubiquitous.

It localises to the membrane. Together with WIT1, required for the nuclear envelope docking of RANGAP proteins in root tips. Plays a role in nuclear shape determination. As component of the SUN-WIP-WIT2-KAKU1 complex, mediates the transfer of cytoplasmic forces to the nuclear envelope (NE), leading to nuclear shape changes. This chain is WPP domain-interacting tail-anchored protein 2 (WIT2), found in Arabidopsis thaliana (Mouse-ear cress).